A 129-amino-acid chain; its full sequence is Small ribosomal subunit protein uS11 (129 aa).

The protein belongs to the universal ribosomal protein uS11 family. As to quaternary structure, part of the 30S ribosomal subunit. Interacts with proteins S7 and S18. Binds to IF-3.

Functionally, located on the platform of the 30S subunit, it bridges several disparate RNA helices of the 16S rRNA. Forms part of the Shine-Dalgarno cleft in the 70S ribosome. In Lysinibacillus sphaericus (strain C3-41), this protein is Small ribosomal subunit protein uS11.